The chain runs to 609 residues: UvrABC system protein C (609 aa).

The GIY-YIG domain occupies serine 16–valine 94. Positions glutamine 203–valine 238 constitute a UVR domain.

It belongs to the UvrC family. Interacts with UvrB in an incision complex.

Its subcellular location is the cytoplasm. Functionally, the UvrABC repair system catalyzes the recognition and processing of DNA lesions. UvrC both incises the 5' and 3' sides of the lesion. The N-terminal half is responsible for the 3' incision and the C-terminal half is responsible for the 5' incision. This is UvrABC system protein C from Shewanella piezotolerans (strain WP3 / JCM 13877).